The sequence spans 276 residues: Pantothenate synthetase (276 aa).

26 to 33 (MGYLHEGH) contributes to the ATP binding site. The active-site Proton donor is the His-33. Gln-57 is a (R)-pantoate binding site. Gln-57 provides a ligand contact to beta-alanine. Residue 142 to 145 (GLKD) coordinates ATP. Gln-148 contacts (R)-pantoate. Residues Ile-171 and 179–182 (KSSR) each bind ATP.

Belongs to the pantothenate synthetase family. Homodimer.

Its subcellular location is the cytoplasm. It carries out the reaction (R)-pantoate + beta-alanine + ATP = (R)-pantothenate + AMP + diphosphate + H(+). Its pathway is cofactor biosynthesis; (R)-pantothenate biosynthesis; (R)-pantothenate from (R)-pantoate and beta-alanine: step 1/1. Catalyzes the condensation of pantoate with beta-alanine in an ATP-dependent reaction via a pantoyl-adenylate intermediate. This is Pantothenate synthetase from Exiguobacterium sp. (strain ATCC BAA-1283 / AT1b).